The chain runs to 250 residues: Probable transcriptional regulatory protein tll0175 (250 aa).

This sequence belongs to the TACO1 family.

It localises to the cytoplasm. The polypeptide is Probable transcriptional regulatory protein tll0175 (Thermosynechococcus vestitus (strain NIES-2133 / IAM M-273 / BP-1)).